We begin with the raw amino-acid sequence, 259 residues long: Small ribosomal subunit protein mS23 (259 aa).

Belongs to the mitochondrion-specific ribosomal protein mS23 family. As to quaternary structure, component of the mitochondrial small ribosomal subunit.

It localises to the mitochondrion. The sequence is that of Small ribosomal subunit protein mS23 (RSM25) from Pyricularia oryzae (strain 70-15 / ATCC MYA-4617 / FGSC 8958) (Rice blast fungus).